Consider the following 411-residue polypeptide: Glutamyl-tRNA reductase (411 aa).

Residues 49 to 52 (TCNR), serine 99, 104 to 106 (ENE), and glutamine 110 contribute to the substrate site. Catalysis depends on cysteine 50, which acts as the Nucleophile. 179–184 (GAGEAG) contributes to the NADP(+) binding site.

Belongs to the glutamyl-tRNA reductase family. In terms of assembly, homodimer.

It carries out the reaction (S)-4-amino-5-oxopentanoate + tRNA(Glu) + NADP(+) = L-glutamyl-tRNA(Glu) + NADPH + H(+). Its pathway is porphyrin-containing compound metabolism; protoporphyrin-IX biosynthesis; 5-aminolevulinate from L-glutamyl-tRNA(Glu): step 1/2. In terms of biological role, catalyzes the NADPH-dependent reduction of glutamyl-tRNA(Glu) to glutamate 1-semialdehyde (GSA). The sequence is that of Glutamyl-tRNA reductase from Hyperthermus butylicus (strain DSM 5456 / JCM 9403 / PLM1-5).